We begin with the raw amino-acid sequence, 1122 residues long: Midnolin homolog (1122 aa).

A Ubiquitin-like domain is found at 69–143 (INLNISTTTG…IILIPNVETG (75 aa)). The tract at residues 210–300 (GGASGSSINA…SGQRSSGRIG (91 aa)) is required for interaction with Pc. Disordered stretches follow at residues 257-399 (VGGS…STLN), 596-630 (KHRH…HFFN), 645-677 (FATS…GAGA), 746-775 (GVVS…KSGS), 840-876 (APTT…RSKM), 886-905 (KCNS…ASGS), 922-955 (AATK…NGCT), and 1067-1122 (AAPA…DTAA). Residues 266 to 298 (SGTSSSSSSTSSSSSSSSSSSRTRSSGQRSSGR) show a composition bias toward low complexity. 2 stretches are compositionally biased toward basic residues: residues 300–310 (GHGHVHSHQHP) and 321–352 (SHGH…HHHN). A compositionally biased stretch (low complexity) spans 375-397 (PSSSGASGSAPATGTGQSQSSST). Basic residues predominate over residues 596 to 610 (KHRHYHGQGHGHGHG). Low complexity-rich tracts occupy residues 612 to 627 (GHSS…SSSH), 648 to 663 (SSSS…SSSP), 746 to 766 (GVVS…AASG), 856 to 867 (SGSSSTTSSGSG), 889 to 903 (SRAQ…TLAS), and 922 to 936 (AATK…SSHS). Composition is skewed to polar residues over residues 937 to 954 (CCQT…SNGC) and 1071 to 1085 (NSIT…VNGN). A compositionally biased stretch (low complexity) spans 1086 to 1107 (TSTAPATAATSAAAAPTAAPPS).

In terms of assembly, interacts with PRC1 complex member polycomb protein Pc; the interaction targets Pc for ubiquitin-independent proteasomal degradation. Does not interact with PRC1 members Ph, Psc or Sce so does not appear to be a member of the PRC1 complex. Interacts with 26S proteasome regulatory subunit Rpn10.

The protein resides in the nucleus. In terms of biological role, facilitates ubiquitin-independent proteasomal degradation of polycomb protein Pc by interacting directly with the proteasome and recruiting Pc to it. The protein is Midnolin homolog of Drosophila melanogaster (Fruit fly).